We begin with the raw amino-acid sequence, 106 residues long: PAT complex subunit Asterix (106 aa).

Residues Met1–Leu29 are disordered. Residue Ser2 is modified to N-acetylserine. Over Ser2 to Pro32 the chain is Cytoplasmic. A helical membrane pass occupies residues Thr33–Leu51. Residue Lys52 is a topological domain, lumenal. The chain crosses the membrane as a helical span at residues Leu53–Asn70. Residues Ser71 to Ser74 lie on the Cytoplasmic side of the membrane. A helical membrane pass occupies residues Glu75–Tyr95. The Lumenal segment spans residues Leu96–Trp106.

The protein belongs to the Asterix family. As to quaternary structure, component of the PAT complex, composed of WDR83OS/Asterix and CCDC47. The PAT complex is part of the multi-pass translocon (MPT) complex, composed of three subcomplexes, the GEL complex (composed of RAB5IF/OPTI and TMCO1), the BOS complex (composed of NCLN/Nicalin, NOMO1 and TMEM147) and the PAT complex (composed of WDR83OS/Asterix and CCDC47). The MPT complex associates with the SEC61 complex.

It localises to the endoplasmic reticulum membrane. Functionally, component of the multi-pass translocon (MPT) complex that mediates insertion of multi-pass membrane proteins into the lipid bilayer of membranes. The MPT complex takes over after the SEC61 complex: following membrane insertion of the first few transmembrane segments of proteins by the SEC61 complex, the MPT complex occludes the lateral gate of the SEC61 complex to promote insertion of subsequent transmembrane regions. Within the MPT complex, the PAT subcomplex sequesters any highly polar regions in the transmembrane domains away from the non-polar membrane environment until they can be buried in the interior of the fully assembled protein. Within the PAT subcomplex, WDR83OS/Asterix binds to and redirects the substrate to a location behind the SEC61 complex. This is PAT complex subunit Asterix (WDR83OS) from Bos taurus (Bovine).